A 466-amino-acid polypeptide reads, in one-letter code: 3-isopropylmalate dehydratase large subunit (466 aa).

3 residues coordinate [4Fe-4S] cluster: Cys-347, Cys-407, and Cys-410.

This sequence belongs to the aconitase/IPM isomerase family. LeuC type 1 subfamily. In terms of assembly, heterodimer of LeuC and LeuD. [4Fe-4S] cluster is required as a cofactor.

It carries out the reaction (2R,3S)-3-isopropylmalate = (2S)-2-isopropylmalate. The protein operates within amino-acid biosynthesis; L-leucine biosynthesis; L-leucine from 3-methyl-2-oxobutanoate: step 2/4. Catalyzes the isomerization between 2-isopropylmalate and 3-isopropylmalate, via the formation of 2-isopropylmaleate. The protein is 3-isopropylmalate dehydratase large subunit of Escherichia coli O139:H28 (strain E24377A / ETEC).